We begin with the raw amino-acid sequence, 550 residues long: Hydroxylamine reductase (550 aa).

Cysteine 3, cysteine 6, cysteine 18, and cysteine 25 together coordinate [2Fe-2S] cluster. Residues histidine 249, glutamate 273, cysteine 317, cysteine 405, cysteine 433, cysteine 458, glutamate 492, and lysine 494 each contribute to the hybrid [4Fe-2O-2S] cluster site. A Cysteine persulfide modification is found at cysteine 405.

The protein belongs to the HCP family. [2Fe-2S] cluster serves as cofactor. Requires hybrid [4Fe-2O-2S] cluster as cofactor.

Its subcellular location is the cytoplasm. It carries out the reaction A + NH4(+) + H2O = hydroxylamine + AH2 + H(+). In terms of biological role, catalyzes the reduction of hydroxylamine to form NH(3) and H(2)O. In Escherichia coli O17:K52:H18 (strain UMN026 / ExPEC), this protein is Hydroxylamine reductase.